A 413-amino-acid polypeptide reads, in one-letter code: Exodeoxyribonuclease 7 large subunit (413 aa).

The protein belongs to the XseA family. As to quaternary structure, heterooligomer composed of large and small subunits.

It is found in the cytoplasm. It catalyses the reaction Exonucleolytic cleavage in either 5'- to 3'- or 3'- to 5'-direction to yield nucleoside 5'-phosphates.. Functionally, bidirectionally degrades single-stranded DNA into large acid-insoluble oligonucleotides, which are then degraded further into small acid-soluble oligonucleotides. In Corynebacterium efficiens (strain DSM 44549 / YS-314 / AJ 12310 / JCM 11189 / NBRC 100395), this protein is Exodeoxyribonuclease 7 large subunit.